A 496-amino-acid chain; its full sequence is Glycylpeptide N-tetradecanoyltransferase 1 (496 aa).

The interval 1–82 (MADESETAVK…STQDQPVKMT (82 aa)) is disordered. Ser31 and Ser47 each carry phosphoserine. Positions 55-66 (KKKKKKQKKKKE) are enriched in basic residues. Ser83 carries the post-translational modification Phosphoserine. Tetradecanoyl-CoA-binding residues include Gln118, Phe119, Trp120, Phe247, Leu248, Cys249, Val250, Ser256, Arg258, Val259, and Ala260.

This sequence belongs to the NMT family. In terms of tissue distribution, ubiquitous.

The protein resides in the cytoplasm. It localises to the cytosol. It is found in the membrane. It carries out the reaction N-terminal glycyl-[protein] + tetradecanoyl-CoA = N-tetradecanoylglycyl-[protein] + CoA + H(+). The catalysed reaction is N-terminal glycyl-L-lysyl-[protein] + tetradecanoyl-CoA = N-terminal glycyl-(N(6)-tetradecanoyl)-L-lysyl-[protein] + CoA + H(+). Adds a myristoyl group to the N-terminal glycine residue of certain cellular and viral proteins. Also able to mediate N-terminal lysine myristoylation of proteins: catalyzes myristoylation of ARF6 on both 'Gly-2' and 'Lys-3'. Lysine myristoylation is required to maintain ARF6 on membranes during the GTPase cycle. Required for normal embryogenesis. The protein is Glycylpeptide N-tetradecanoyltransferase 1 of Mus musculus (Mouse).